The following is a 173-amino-acid chain: Lipoprotein signal peptidase (173 aa).

The next 4 membrane-spanning stretches (helical) occupy residues 14–34 (LAWL…KYYF), 44–64 (IIVI…AAFS), 72–92 (WQRW…VVWL), and 98–118 (DDTW…GNLY). Active-site residues include D128 and D147. Residues 139–159 (YFPAFNVADSAITVGAIMLAL) traverse the membrane as a helical segment.

Belongs to the peptidase A8 family.

It is found in the cell inner membrane. It catalyses the reaction Release of signal peptides from bacterial membrane prolipoproteins. Hydrolyzes -Xaa-Yaa-Zaa-|-(S,diacylglyceryl)Cys-, in which Xaa is hydrophobic (preferably Leu), and Yaa (Ala or Ser) and Zaa (Gly or Ala) have small, neutral side chains.. It functions in the pathway protein modification; lipoprotein biosynthesis (signal peptide cleavage). Functionally, this protein specifically catalyzes the removal of signal peptides from prolipoproteins. This Pseudomonas syringae pv. tomato (strain ATCC BAA-871 / DC3000) protein is Lipoprotein signal peptidase.